A 485-amino-acid polypeptide reads, in one-letter code: GTPase Obg (485 aa).

Residues 1 to 159 (MKFVDEVRIF…LTLRLELKLL (159 aa)) enclose the Obg domain. Residues 160 to 332 (ADVGLLGFPN…LMDSVAEVLF (173 aa)) form the OBG-type G domain. GTP contacts are provided by residues 166–173 (GFPNAGKS), 191–195 (FTTLV), 213–216 (DIPG), 284–287 (NKLD), and 313–315 (SCA). Mg(2+) contacts are provided by Ser-173 and Thr-193. Composition is skewed to low complexity over residues 367-385 (AGAA…AAKK), 394-428 (RKAG…PVKK), 437-446 (RKSGTAPAKK), and 455-474 (RKSG…ATKR). Residues 367–485 (AGAAAATKSA…PARKSGGGRS (119 aa)) are disordered.

This sequence belongs to the TRAFAC class OBG-HflX-like GTPase superfamily. OBG GTPase family. Monomer. It depends on Mg(2+) as a cofactor.

The protein resides in the cytoplasm. Its function is as follows. An essential GTPase which binds GTP, GDP and possibly (p)ppGpp with moderate affinity, with high nucleotide exchange rates and a fairly low GTP hydrolysis rate. Plays a role in control of the cell cycle, stress response, ribosome biogenesis and in those bacteria that undergo differentiation, in morphogenesis control. This Myxococcus xanthus (strain DK1622) protein is GTPase Obg.